The chain runs to 225 residues: UPF0758 protein Bpet3149 (225 aa).

The MPN domain maps to 103–225 (AMSEPGSVKR…VVSMAELGLL (123 aa)). Residues histidine 174, histidine 176, and aspartate 187 each coordinate Zn(2+). The JAMM motif signature appears at 174–187 (HNHPSGSAQPSQAD).

This sequence belongs to the UPF0758 family.

This is UPF0758 protein Bpet3149 from Bordetella petrii (strain ATCC BAA-461 / DSM 12804 / CCUG 43448).